A 252-amino-acid polypeptide reads, in one-letter code: Tumor necrosis factor ligand superfamily member 15 (252 aa).

The Cytoplasmic segment spans residues 1–39; that stretch reads MAEELGLGFGEAVPVEMLPEGCRHRREARTGLAARSKAC. A helical; Signal-anchor for type II membrane protein membrane pass occupies residues 40–60; sequence LALTCCLLSFPILAGLSTLLM. Residues 61–252 are Extracellular-facing; sequence TGQLRIPGKD…DKTFFGAFLI (192 aa). One can recognise a THD domain in the interval 96 to 252; that stretch reads PKAHLTIMRQ…DKTFFGAFLI (157 aa). Asn134 carries N-linked (GlcNAc...) asparagine glycosylation. The cysteines at positions 163 and 203 are disulfide-linked. Asn230 is a glycosylation site (N-linked (GlcNAc...) asparagine).

This sequence belongs to the tumor necrosis factor family. In terms of assembly, homotrimer.

It is found in the membrane. Receptor for TNFRSF25 and TNFRSF6B. Mediates activation of NF-kappa-B. Inhibits vascular endothelial growth and angiogenesis (in vitro). Promotes activation of caspases and apoptosis. Promotes splenocyte alloactivation. This chain is Tumor necrosis factor ligand superfamily member 15 (Tnfsf15), found in Rattus norvegicus (Rat).